Consider the following 333-residue polypeptide: tRNA-dihydrouridine(16) synthase (333 aa).

FMN contacts are provided by residues 19-21 and Q80; that span reads PMQ. C110 acts as the Proton donor in catalysis. Residues K151, 211 to 213, and 235 to 236 each bind FMN; these read NGD and GR.

Belongs to the Dus family. DusC subfamily. The cofactor is FMN.

The catalysed reaction is 5,6-dihydrouridine(16) in tRNA + NADP(+) = uridine(16) in tRNA + NADPH + H(+). It catalyses the reaction 5,6-dihydrouridine(16) in tRNA + NAD(+) = uridine(16) in tRNA + NADH + H(+). In terms of biological role, catalyzes the synthesis of 5,6-dihydrouridine (D), a modified base found in the D-loop of most tRNAs, via the reduction of the C5-C6 double bond in target uridines. Specifically modifies U16 in tRNAs. The chain is tRNA-dihydrouridine(16) synthase from Neisseria meningitidis serogroup B (strain ATCC BAA-335 / MC58).